Reading from the N-terminus, the 126-residue chain is MDTHTTKLVAISLLLLLVISDYTRLMIQVHSYVPFCAYTYDYFSYCLDFLTGYYYKPGKKCCVHIVKLNIIAKHKKENPRLLCNCVEMMTRGYTPPMLADKIQQLPLLCNTHLSFPISSSMDCSTV.

An N-terminal signal peptide occupies residues 1-20 (MDTHTTKLVAISLLLLLVIS). 4 disulfide bridges follow: cysteine 36–cysteine 85, cysteine 46–cysteine 61, cysteine 62–cysteine 109, and cysteine 83–cysteine 123.

This sequence belongs to the plant LTP family.

Its function is as follows. Plant non-specific lipid-transfer proteins transfer phospholipids as well as galactolipids across membranes. May play a role in wax or cutin deposition in the cell walls of expanding epidermal cells and certain secretory tissues. This is Non-specific lipid-transfer protein 13 (LTP13) from Arabidopsis thaliana (Mouse-ear cress).